The following is a 361-amino-acid chain: Histidinol-phosphate aminotransferase (361 aa).

The residue at position 221 (K221) is an N6-(pyridoxal phosphate)lysine.

It belongs to the class-II pyridoxal-phosphate-dependent aminotransferase family. Histidinol-phosphate aminotransferase subfamily. It depends on pyridoxal 5'-phosphate as a cofactor.

The catalysed reaction is L-histidinol phosphate + 2-oxoglutarate = 3-(imidazol-4-yl)-2-oxopropyl phosphate + L-glutamate. Its pathway is amino-acid biosynthesis; L-histidine biosynthesis; L-histidine from 5-phospho-alpha-D-ribose 1-diphosphate: step 7/9. This is Histidinol-phosphate aminotransferase from Methanocella arvoryzae (strain DSM 22066 / NBRC 105507 / MRE50).